The following is a 275-amino-acid chain: 4-diphosphocytidyl-2-C-methyl-D-erythritol kinase (275 aa).

Residue Lys14 is part of the active site. Position 98-108 (98-108 (PMGAGLGGGSS)) interacts with ATP. Asp140 is an active-site residue.

This sequence belongs to the GHMP kinase family. IspE subfamily.

The enzyme catalyses 4-CDP-2-C-methyl-D-erythritol + ATP = 4-CDP-2-C-methyl-D-erythritol 2-phosphate + ADP + H(+). It participates in isoprenoid biosynthesis; isopentenyl diphosphate biosynthesis via DXP pathway; isopentenyl diphosphate from 1-deoxy-D-xylulose 5-phosphate: step 3/6. Functionally, catalyzes the phosphorylation of the position 2 hydroxy group of 4-diphosphocytidyl-2C-methyl-D-erythritol. The polypeptide is 4-diphosphocytidyl-2-C-methyl-D-erythritol kinase (Francisella tularensis subsp. tularensis (strain WY96-3418)).